A 329-amino-acid polypeptide reads, in one-letter code: Prostaglandin reductase 1 (329 aa).

Phosphothreonine is present on threonine 18. The residue at position 20 (serine 20) is a Phosphoserine. Residues 152–155 (GAVG), lysine 178, tyrosine 193, asparagine 217, 239–245 (CGAISTY), 270–272 (FVV), and asparagine 321 each bind NADP(+). Lysine 178 is modified (N6-(2-hydroxyisobutyryl)lysine; alternate). N6-acetyllysine; alternate is present on lysine 178.

Belongs to the NADP-dependent oxidoreductase L4BD family. Monomer or homodimer. In terms of tissue distribution, high expression in the kidney, liver, and intestine but not in leukocytes.

Its subcellular location is the cytoplasm. The catalysed reaction is 13,14-dihydro-15-oxo-prostaglandin E1 + NADP(+) = 15-oxoprostaglandin E1 + NADPH + H(+). It carries out the reaction 13,14-dihydro-15-oxo-prostaglandin E2 + NADP(+) = 15-oxoprostaglandin E2 + NADPH + H(+). The enzyme catalyses 13,14-dihydro-15-oxo-prostaglandin F1alpha + NADP(+) = 15-oxoprostaglandin F1alpha + NADPH + H(+). It catalyses the reaction 13,14-dihydro-15-oxo-PGF2alpha + NADP(+) = 15-oxoprostaglandin F2alpha + NADPH + H(+). The catalysed reaction is leukotriene B4 + NADP(+) = 12-oxo-leukotriene B4 + NADPH + H(+). It carries out the reaction 20-hydroxy-leukotriene B4 + NADP(+) = 12-oxo-20-hydroxy-leukotriene B4 + NADPH + H(+). The enzyme catalyses 6-trans-leukotriene B4 + NADP(+) = 12-oxo-(5S)-hydroxy-(6E,8E,10E,14Z)-eicosatetraenoate + NADPH + H(+). It catalyses the reaction (5S,12S)-dihydroxy-(6E,10E,12E,14Z)-eicosatetraenoate + NADP(+) = 12-oxo-(5S)-hydroxy-(6E,8E,10E,14Z)-eicosatetraenoate + NADPH + H(+). The catalysed reaction is an n-alkanal + NADP(+) = an alk-2-enal + NADPH + H(+). It carries out the reaction hexanal + NADP(+) = (E)-hex-2-enal + NADPH + H(+). The enzyme catalyses octanal + NADP(+) = (2E)-octenal + NADPH + H(+). It catalyses the reaction decanal + NADP(+) = (2E)-decenal + NADPH + H(+). The catalysed reaction is dodecanal + NADP(+) = (2E)-dodecenal + NADPH + H(+). It carries out the reaction 4-hydroxynonanal + NADP(+) = (E)-4-hydroxynon-2-enal + NADPH + H(+). The enzyme catalyses pentan-2-one + NADP(+) = (E)-pent-3-en-2-one + NADPH + H(+). It catalyses the reaction nonan-2-one + NADP(+) = (3E)-nonen-2-one + NADPH + H(+). In terms of biological role, NAD(P)H-dependent oxidoreductase involved in metabolic inactivation of pro- and anti-inflammatory eicosanoids: prostaglandins (PG), leukotrienes (LT) and lipoxins (LX). Catalyzes with high efficiency the reduction of the 13,14 double bond of 15-oxoPGs, including 15-oxo-PGE1, 15-oxo-PGE2, 15-oxo-PGF1-alpha and 15-oxo-PGF2-alpha. Catalyzes with lower efficiency the oxidation of the hydroxyl group at C12 of LTB4 and its derivatives, converting them into biologically less active 12-oxo-LTB4 metabolites. Reduces 15-oxo-LXA4 to 13,14 dihydro-15-oxo-LXA4, enhancing neutrophil recruitment at the inflammatory site. May play a role in metabolic detoxification of alkenals and ketones. Reduces alpha,beta-unsaturated alkenals and ketones, particularly those with medium-chain length, showing highest affinity toward (2E)-decenal and (3E)-3-nonen-2-one. May inactivate 4-hydroxy-2-nonenal, a cytotoxic lipid constituent of oxidized low-density lipoprotein particles. In Homo sapiens (Human), this protein is Prostaglandin reductase 1 (PTGR1).